The primary structure comprises 206 residues: Two-component response regulator ARR7 (206 aa).

The 128-residue stretch at 25 to 152 (HVLAVDDSIV…DVKRIKQLIM (128 aa)) folds into the Response regulatory domain. Residue Asp85 is modified to 4-aspartylphosphate. A disordered region spans residues 165-206 (SNKRKLQEDSDTSSSSHDDTSIKDSSCSKRMKSESENLFSLL).

The protein belongs to the ARR family. Type-A subfamily. Two-component system major event consists of a His-to-Asp phosphorelay between a sensor histidine kinase (HK) and a response regulator (RR). In plants, the His-to-Asp phosphorelay involves an additional intermediate named Histidine-containing phosphotransfer protein (HPt). This multistep phosphorelay consists of a His-Asp-His-Asp sequential transfer of a phosphate group between first a His and an Asp of the HK protein, followed by the transfer to a conserved His of the HPt protein and finally the transfer to an Asp in the receiver domain of the RR protein. In terms of tissue distribution, predominantly expressed in roots and young flowers.

The protein resides in the nucleus. Its function is as follows. Functions as a response regulator involved in His-to-Asp phosphorelay signal transduction system. Phosphorylation of the Asp residue in the receiver domain activates the ability of the protein to promote the transcription of target genes. Type-A response regulators seem to act as negative regulators of the cytokinin signaling. This chain is Two-component response regulator ARR7 (ARR7), found in Arabidopsis thaliana (Mouse-ear cress).